A 223-amino-acid chain; its full sequence is UPF0758 protein Cvib_1178 (223 aa).

An MPN domain is found at 100-222 (KIQGARDVYE…WYSFRENNQL (123 aa)). Zn(2+)-binding residues include His171, His173, and Asp184. Residues 171-184 (HNHPSGDTEPSNAD) carry the JAMM motif motif.

It belongs to the UPF0758 family.

The protein is UPF0758 protein Cvib_1178 of Chlorobium phaeovibrioides (strain DSM 265 / 1930) (Prosthecochloris vibrioformis (strain DSM 265)).